We begin with the raw amino-acid sequence, 646 residues long: Ribonuclease Y (646 aa).

The helical transmembrane segment at 4-24 (VLVVLLSLVLVVLSVLILAVA) threads the bilayer. 2 disordered regions span residues 43–62 (PRTPAARGVGDVTGPADFDE) and 69–118 (LPAP…HGGS). The region spanning 336–402 (VVTVLHLPGD…RITLAALVSD (67 aa)) is the KH domain. The 94-residue stretch at 462–555 (VLAHLIESAH…TQAADQISGG (94 aa)) folds into the HD domain.

It belongs to the RNase Y family.

It is found in the cell membrane. In terms of biological role, endoribonuclease that initiates mRNA decay. This chain is Ribonuclease Y, found in Frankia casuarinae (strain DSM 45818 / CECT 9043 / HFP020203 / CcI3).